A 102-amino-acid chain; its full sequence is UPF0045 protein Mb1933 (102 aa).

This sequence belongs to the UPF0045 family.

This chain is UPF0045 protein Mb1933, found in Mycobacterium bovis (strain ATCC BAA-935 / AF2122/97).